We begin with the raw amino-acid sequence, 186 residues long: CASP-like protein 7 (186 aa).

The Cytoplasmic segment spans residues 1-26 (MKGGSIEAGEVSKDASPRKGVARGLS). Residues 27–47 (IMDFILRIIAAVATLGSALAM) form a helical membrane-spanning segment. Residues 48-72 (GTTNETLPFATQFIKFRAEFDDLPS) lie on the Extracellular side of the membrane. Asparagine 51 is a glycosylation site (N-linked (GlcNAc...) asparagine). Residues 73–93 (LVFFVMANAVVCGYLVLSLMI) form a helical membrane-spanning segment. The Cytoplasmic segment spans residues 94–107 (SVFHILRSTPVKSR). Residues 108–128 (ILLVALDTVMLSLVTASASAA) traverse the membrane as a helical segment. Residues 129 to 162 (TSIVYIAHNGNTGANWFAICQQYNNFCERISGSL) are Extracellular-facing. Residues 163–183 (IGSYIAVALFIILIMLSLVAI) traverse the membrane as a helical segment. The Cytoplasmic portion of the chain corresponds to 184–186 (SRN).

It belongs to the Casparian strip membrane proteins (CASP) family. Homodimer and heterodimers.

It is found in the cell membrane. Its function is as follows. Regulates membrane-cell wall junctions and localized cell wall deposition. Required for establishment of the Casparian strip membrane domain (CSD) and the subsequent formation of Casparian strips, a cell wall modification of the root endodermis that determines an apoplastic barrier between the intraorganismal apoplasm and the extraorganismal apoplasm and prevents lateral diffusion. This chain is CASP-like protein 7, found in Glycine max (Soybean).